The chain runs to 868 residues: MAEKVSEDVMLLHGDLDLKIVKARRLPNMDMFSEHLRRLFTACNACARPTDTDDVDPRDKGEFGDKNIRSHRKVITSDPYVTVVVPQATLARTRVLKNSQEPLWDEKFNISIAHPFAYLEFQVKDDDVFGAQIIGTAKIPVRDIASGERISGWFPVLGASGKPPKAETAIFIDMKFTPFDQIHSYRCGIAGDPERRGVRRTYFPVRKGSQVRLYQDAHVMDGTLPAIGLDNGKVYEHGKCWEDICYAISEAHHMIYIVGWSIFHKIKLVRETKVPRDKDMTLGELLKYKSQEGVRVLLLVWDDKTSHDKFGIKTPGVMGTHDEETRKFFKHSSVICVLSPRYASSKLGLFKQQASPSSSIYIMTVVGTLFTHHQKCVLVDTQAVGNNRKVTAFIGGLDLCDGRYDTPEHRILHDLDTVFKDDFHNPTFPAGTKAPRQPWHDLHCRIDGPAAYDVLINFEQRWRKATRWKEFSLRLKGKTHWQDDALIRIGRISWILSPVFKFLKDGTSIIPEDDPCVWVSKEDDPENWHVQIFRSIDSGSVKGFPKYEDEAEAQHLECAKRLVVDKSIQTAYIQTIRSAQHFIYIENQYFLGSSYAWPSYRDAGADNLIPMELALKIVSKIRAKERFAVYVVIPLWPEGDPKSGPVQEILYWQSQTMQMMYDVIAKELKAVQSDAHPLDYLNFYCLGKREQLPDDMPATNGSVVSDSYNFQRFMIYVHAKGMIVDDEYVLMGSANINQRSMAGTKDTEIAMGAYQPNHTWAHKGRHPRGQVYGYRMSLWAEHLGKTGDEFVEPSDLECLKKVNTISEENWKRFIDPKFSELQGHLIKYPLQVDVDGKVSPLPDYETFPDVGGKIIGAHSMALPDTLTT.

A C2 domain is found at 1 to 154; that stretch reads MAEKVSEDVM…ASGERISGWF (154 aa). Aspartate 216 is a Ca(2+) binding site. Residues 368–403 enclose the PLD phosphodiesterase 1 domain; sequence TLFTHHQKCVLVDTQAVGNNRKVTAFIGGLDLCDGR. Active-site residues include histidine 373, lysine 375, and aspartate 380. Histidine 373 contacts a 1,2-diacyl-sn-glycero-3-phosphate. Positions 409 and 440 each coordinate Ca(2+). Glutamine 588 and histidine 718 together coordinate a 1,2-diacyl-sn-glycero-3-phosphate. In terms of domain architecture, PLD phosphodiesterase 2 spans 713–740; that stretch reads FMIYVHAKGMIVDDEYVLMGSANINQRS. Catalysis depends on residues histidine 718, lysine 720, and aspartate 725. A Ca(2+)-binding site is contributed by glutamate 781.

This sequence belongs to the phospholipase D family. C2-PLD subfamily. As to quaternary structure, interacts with GAPC1 and GAPC2. Increased interaction in the presence of H(2)O(2). It depends on Ca(2+) as a cofactor. Expressed in roots, leaves, stems, siliques and flowers. Strongly expressed in the vascular tissues of cotyledons and leaves under dehydration stress conditions. Expression is higher in old leaves than in young leaves. Expressed in leaves and guard cells. The isoform 2 may not be present in siliques.

It is found in the cell membrane. It carries out the reaction a 1,2-diacyl-sn-glycero-3-phosphocholine + H2O = a 1,2-diacyl-sn-glycero-3-phosphate + choline + H(+). Activated by free oleic acid in a dose-dependent manner and less effectively by other unsaturated fatty acids such as linoleic and linolenic acids. Not activated by the saturated fatty acids stearic and palmitic acids. PIP2 and Ca(2+) stimulate activity by promoting lipid substrate binding to the active site. Activated by H(2)O(2) and by binding to GAPC. Functionally, hydrolyzes glycerol-phospholipids at the terminal phosphodiesteric bond to generate phosphatidic acids (PA). May be involved in PA accumulation in the dehydration stress response and in the transduction of hormonal and environmental signals to the microtubules cytoskeleton. Prefers phosphatidylethanolamine to phosphatidylcholine as substrate. Involved in H(2)O(2) and abscisic acid (ABA)-induced stomatal closure. Involved in nitric oxide (NO) signaling during stomatal closure. Plays a positive role in ABA-promoted senescence. Involved in basal defense and nonhost resistance. This chain is Phospholipase D delta, found in Arabidopsis thaliana (Mouse-ear cress).